Reading from the N-terminus, the 635-residue chain is Interferon-induced GTP-binding protein Mx1 (635 aa).

Residues 31–309 (DLALPAIAVI…LVHHIELSLP (279 aa)) form the Dynamin-type G domain. Positions 41-48 (GDQSSGKS) are G1 motif. Residue 41–48 (GDQSSGKS) participates in GTP binding. The G2 motif stretch occupies residues 66 to 68 (VTR). The interval 147 to 150 (DLPG) is G3 motif. GTP is bound by residues 147–151 (DLPGI) and 216–219 (TKPD). A G4 motif region spans residues 216–219 (TKPD). The interval 248–251 (RCRG) is G5 motif. One can recognise a GED domain in the interval 549-635 (LEELMRHLKS…MEARNYLVKF (87 aa)).

Belongs to the TRAFAC class dynamin-like GTPase superfamily. Dynamin/Fzo/YdjA family.

It localises to the cytoplasm. The protein is Interferon-induced GTP-binding protein Mx1 (mx1) of Ictalurus punctatus (Channel catfish).